The sequence spans 88 residues: Small ribosomal subunit protein uS17 (88 aa).

This sequence belongs to the universal ribosomal protein uS17 family. In terms of assembly, part of the 30S ribosomal subunit.

Functionally, one of the primary rRNA binding proteins, it binds specifically to the 5'-end of 16S ribosomal RNA. The chain is Small ribosomal subunit protein uS17 from Mycoplasmopsis agalactiae (strain NCTC 10123 / CIP 59.7 / PG2) (Mycoplasma agalactiae).